The chain runs to 189 residues: Segregation and condensation protein B (189 aa).

The protein belongs to the ScpB family. In terms of assembly, homodimer. Homodimerization may be required to stabilize the binding of ScpA to the Smc head domains. Component of a cohesin-like complex composed of ScpA, ScpB and the Smc homodimer, in which ScpA and ScpB bind to the head domain of Smc. The presence of the three proteins is required for the association of the complex with DNA.

It localises to the cytoplasm. Functionally, participates in chromosomal partition during cell division. May act via the formation of a condensin-like complex containing Smc and ScpA that pull DNA away from mid-cell into both cell halves. The chain is Segregation and condensation protein B from Streptococcus sanguinis (strain SK36).